Consider the following 361-residue polypeptide: S-adenosylmethionine:tRNA ribosyltransferase-isomerase (361 aa).

Belongs to the QueA family. Monomer.

The protein localises to the cytoplasm. It carries out the reaction 7-aminomethyl-7-carbaguanosine(34) in tRNA + S-adenosyl-L-methionine = epoxyqueuosine(34) in tRNA + adenine + L-methionine + 2 H(+). The protein operates within tRNA modification; tRNA-queuosine biosynthesis. Functionally, transfers and isomerizes the ribose moiety from AdoMet to the 7-aminomethyl group of 7-deazaguanine (preQ1-tRNA) to give epoxyqueuosine (oQ-tRNA). The sequence is that of S-adenosylmethionine:tRNA ribosyltransferase-isomerase from Actinobacillus pleuropneumoniae serotype 7 (strain AP76).